We begin with the raw amino-acid sequence, 401 residues long: Homoserine O-acetyltransferase (401 aa).

The AB hydrolase-1 domain maps to 37-358 (NAVLVCHALT…HGHDAFLVEP (322 aa)). Catalysis depends on serine 146, which acts as the Nucleophile. Arginine 215 is a binding site for substrate. Active-site residues include aspartate 318 and histidine 351. Residue aspartate 352 participates in substrate binding.

It belongs to the AB hydrolase superfamily. MetX family. Homodimer.

The protein resides in the cytoplasm. It catalyses the reaction L-homoserine + acetyl-CoA = O-acetyl-L-homoserine + CoA. Its pathway is amino-acid biosynthesis; L-methionine biosynthesis via de novo pathway; O-acetyl-L-homoserine from L-homoserine: step 1/1. Its function is as follows. Transfers an acetyl group from acetyl-CoA to L-homoserine, forming acetyl-L-homoserine. The sequence is that of Homoserine O-acetyltransferase from Natronomonas pharaonis (strain ATCC 35678 / DSM 2160 / CIP 103997 / JCM 8858 / NBRC 14720 / NCIMB 2260 / Gabara) (Halobacterium pharaonis).